Here is a 95-residue protein sequence, read N- to C-terminus: Citrate lyase acyl carrier protein (95 aa).

Ser-14 carries the post-translational modification O-(phosphoribosyl dephospho-coenzyme A)serine.

The protein belongs to the CitD family. Oligomer with a subunit composition of (alpha,beta,gamma)6.

The protein resides in the cytoplasm. Covalent carrier of the coenzyme of citrate lyase. The polypeptide is Citrate lyase acyl carrier protein (Haemophilus influenzae (strain 86-028NP)).